A 421-amino-acid polypeptide reads, in one-letter code: WD repeat and SOCS box-containing protein 1 (421 aa).

6 WD repeats span residues 32–71 (KCGR…QNFL), 124–165 (SRCV…LLLN), 168–208 (DHTE…NMMK), 212–251 (GHQN…MIRK), 254–293 (GHHH…ILME), and 309–346 (ANDR…DYPV). The 50-residue stretch at 372–421 (DGSVYFWATPRQVPSLQHLCRMSIRRVMPTQEVQELPIPSKLLEFLSYRI) folds into the SOCS box domain.

As to quaternary structure, interacts with DIO2. Component of the probable ECS(WSB1) E3 ubiquitin ligase complex which contains CUL5, RNF7/RBX2, Elongin BC complex and WSB1. Component of a probable ECS-like E3 ubiquitin-protein ligase complex which contains CUL5, RBX1, Elongin BC complex and WSB1. Interacts with CUL5, RNF7, ELOB and ELOC. Binds to HIPK2 through WD40 repeats.

The protein operates within protein modification; protein ubiquitination. Its function is as follows. Probable substrate-recognition component of a SCF-like ECS (Elongin-Cullin-SOCS-box protein) E3 ubiquitin ligase complex which mediates the ubiquitination and subsequent proteasomal degradation of target proteins. Recognizes type II iodothyronine deiodinase/DIO2. Confers constitutive instability to HIPK2 through proteasomal degradation. In Homo sapiens (Human), this protein is WD repeat and SOCS box-containing protein 1 (WSB1).